Reading from the N-terminus, the 1673-residue chain is NBPF family member NBPF26 (1673 aa).

4 consecutive EGF-like domains span residues 24–63 (HALQ…EYCQ), 64–102 (HRDP…EDCQ), 105–143 (TPHP…KECQ), and 144–180 (WTDA…QKCE). Cystine bridges form between Cys28/Cys41, Cys35/Cys51, Cys53/Cys62, Cys68/Cys79, Cys73/Cys90, Cys92/Cys101, Cys109/Cys121, Cys115/Cys131, Cys133/Cys142, Cys148/Cys159, Cys153/Cys168, Cys170/Cys179, Cys186/Cys198, Cys192/Cys207, Cys209/Cys218, Cys225/Cys236, and Cys230/Cys246. An EGF-like 5; calcium-binding domain is found at 182–219 (DVNECDIPGHCQHGGTCLNLPGSYQCQCLQGFTGQYCD). Residues 221-258 (LYVPCAHSPCVNGGTCRQTGDFTFECNCLPVPDSTSSA) form the EGF-like 6 domain. A coiled-coil region spans residues 337 to 381 (RQFKEEKLAEQLKQAEELRQYKVLVHSQERELTQLKEKLREGRDA). Disordered regions lie at residues 423–463 (KLSP…KVPE), 713–734 (EKVQ…EVPE), and 782–828 (WEDA…EGYS). Acidic residues predominate over residues 427–443 (ENDEDEDEDVQVEEDEK). Olduvai domains follow at residues 427 to 521 (ENDE…NILP), 698 to 790 (ENDN…HIIP), 791 to 879 (ENES…ATGP), 882 to 937 (SREL…VDMD), 938 to 1029 (EIEK…PSCP), 1032 to 1104 (SGEL…PSCP), 1107 to 1162 (SREL…LDVD), 1163 to 1255 (RIKK…RSKK), 1256 to 1348 (ERRR…PSCP), 1351 to 1423 (SREL…PSCP), 1426 to 1481 (SREL…LDVD), 1482 to 1574 (RIKK…RSKK), and 1575 to 1673 (ERRR…IFPQ). Residues 452–463 (EVQKTEESKVPE) are compositionally biased toward basic and acidic residues. Composition is skewed to acidic residues over residues 792–801 (NESDDEEEEE) and 812–824 (ESEE…ESWD). The disordered stretch occupies residues 1242–1280 (KGKGKKRRGRRSKKERRRGRKEGEEDQNPPCPRLSRELL). The segment covering 1243–1261 (GKGKKRRGRRSKKERRRGR) has biased composition (basic residues). Residues 1561-1594 (KGKGKKRRGRRSKKERRRGRKEGEEDQNPPCPRL) are disordered. A compositionally biased stretch (basic residues) spans 1562-1580 (GKGKKRRGRRSKKERRRGR).

This sequence belongs to the NBPF family.

It localises to the cytoplasm. This chain is NBPF family member NBPF26, found in Homo sapiens (Human).